The following is a 238-amino-acid chain: Ribonuclease 3 (238 aa).

Positions 9–141 constitute an RNase III domain; the sequence is LIDFMEKIGY…VVAAVYIDGG (133 aa). Glu54 provides a ligand contact to Mg(2+). Asp58 is a catalytic residue. Asp127 and Glu130 together coordinate Mg(2+). The active site involves Glu130. In terms of domain architecture, DRBM spans 168 to 237; sequence DYKTSLQEIT…ARRAIEKLKG (70 aa).

This sequence belongs to the ribonuclease III family. Homodimer. Requires Mg(2+) as cofactor.

Its subcellular location is the cytoplasm. The enzyme catalyses Endonucleolytic cleavage to 5'-phosphomonoester.. Functionally, digests double-stranded RNA. Involved in the processing of primary rRNA transcript to yield the immediate precursors to the large and small rRNAs (23S and 16S). Processes some mRNAs, and tRNAs when they are encoded in the rRNA operon. Processes pre-crRNA and tracrRNA of type II CRISPR loci if present in the organism. In Pseudothermotoga lettingae (strain ATCC BAA-301 / DSM 14385 / NBRC 107922 / TMO) (Thermotoga lettingae), this protein is Ribonuclease 3.